The sequence spans 1016 residues: MRRWFSKLGSTSLASTSRVTAFSSSESAAVEQLADSSIPPPITPFIIAKPDIHWNVDFASDPCSWESCFDAHWEAAEKLLENEEEISYEKVITVFQHLNCTVQLLMMEANAQPESAIGSILDRHFTHQIMERVVDWAIAAPHFLTPTCQVNMIGLYEVIVGESHTQNHCLLVHKPMLLPLLKLLDWCRKSAEKRNFTPSNTDRHFVLLLNQICTKLAEDTTLLHFFFDFDDDCDEQFLVFSLLIPYLYDSGEVGQLARDALLLILSVSRRLKRVATFIAVKSNFCPVVATGLSGCFSQLSRSFGSMLYVSDSWHKINADDIDSYSSLLDFHSSLIFCNAVIQVAHGYVVSQVIRYVYHGFLLPVVLPSLLQGGQDELISSTAYYHLCLDSVTETVLVQTIVKLLLNESCESNKTVLDVIVERISAGNRLSQVSLSLVRTLIDLRCEDIMFDLVFKYLLPCTFLQPNQTLHLKNQMYVRTAAQTLLTFVPECTYKSSALCSQETLHIYLSECRNYVQETTDACCEKWVWSYDGRSPFFMPKINSDEESATNSNGAFVRHSSVRSSMASARNGLNRYFVSRNAHITADSLRQHTPPPELGEQESSSRSSFPYDIADSSLVLDDEGDELIIPALTPTSLMMMTSSSDYFQFAYGELSETDTEAINPSVVSMSGAPAQSISDKASLASTSANCDTDIEMARSFVLRGWGQIEDTDTFMALMDRVPASKIKHSLEENMALIDSRIQYLEELKAEAKLQDLESDGFKSDTNNDNDDEDPAPLGKPIECFGNQGVGPFLESIMRSLENMLDNSLYVTLQTTSVLAALASYPQPLIAHYLFDQRMLLQPNVKNLFKVMDSLKTQIDAYASSLDGFDVLLERGIKFLRSRAERYEKVVESSRRLRSSESFSRNGNMEGRSSSRGLFNRFRSSNNKRLYPSNDSSHPHEFRIYTHKAIESRDVTLDHARAKQFVFAAIILSQFCQELAATVLQHSTVVPRPKVSPAKDYLRREVNSAGKDANCCAD.

Disordered stretches follow at residues 586–608 and 757–778; these read DSLR…RSSF and SDGF…PLGK.

This sequence belongs to the FHIP family.

This chain is FHIP family protein Bm1_18400, found in Brugia malayi (Filarial nematode worm).